The sequence spans 88 residues: Small ribosomal subunit protein uS17 (88 aa).

The protein belongs to the universal ribosomal protein uS17 family. Part of the 30S ribosomal subunit.

One of the primary rRNA binding proteins, it binds specifically to the 5'-end of 16S ribosomal RNA. This Pseudomonas aeruginosa (strain LESB58) protein is Small ribosomal subunit protein uS17.